The primary structure comprises 126 residues: Protein K7 (126 aa).

A helical membrane pass occupies residues 24-44 (LPLHLWILCSLLAFLPLLVFI).

In terms of assembly, interacts with host CAMLG; this interaction allows efficient apoptosis inhibition. Additionally, interacts with vGPCR/ORF74 and induces its proteasomeal degradation.

It is found in the host membrane. The protein localises to the host mitochondrion. In terms of biological role, plays a role in the inhibition of host apoptosis to allow completion of the viral lytic replication and may thus favor the maintenance of persistent infection in infected host. This Homo sapiens (Human) protein is Protein K7 (K7).